A 77-amino-acid polypeptide reads, in one-letter code: Cell division topological specificity factor (77 aa).

The protein belongs to the MinE family.

Functionally, prevents the cell division inhibition by proteins MinC and MinD at internal division sites while permitting inhibition at polar sites. This ensures cell division at the proper site by restricting the formation of a division septum at the midpoint of the long axis of the cell. This is Cell division topological specificity factor from Helicobacter acinonychis (strain Sheeba).